The primary structure comprises 2477 residues: Spectrin alpha chain, non-erythrocytic 1 (2477 aa).

Residues 1–14 (MDPSGVKVLETAED) are N-terminal domain. 10 Spectrin repeats span residues 45-146 (RFQF…VKLL), 150-251 (KLVQ…QGKL), 256-358 (EVQR…ARLN), 361-465 (YRLQ…QYEQ), 468-570 (DLQL…AQLA), 574-676 (HLQQ…KLRE), 679-781 (QQQQ…QKLA), 785-888 (RLQQ…DLED), 891-969 (QAQQ…ETGK), and 1096-1162 (LFRE…SEGL). The SH3 domain maps to 967 to 1026 (TGKELVLALYDYQEKSPREVTMKKGDILTLLNSTNKDWWKVEVNDRQGFVPAAYVKKLDP). A Phosphotyrosine modification is found at Y1176. Spectrin repeat units lie at residues 1234 to 1336 (EVQR…EKLG), 1339 to 1442 (HDLQ…MMLD), 1446 to 1549 (ELQL…KLGE), 1552 to 1661 (TLQQ…KLKE), 1664 to 1767 (KQQN…KLNE), 1769 to 1873 (HRLH…RLEE), 1876 to 1979 (EYQQ…KLDE), 1983 to 2086 (FLQF…KLLE), 2097 to 2199 (LFLT…LELQ), and 2211 to 2315 (LRQE…NLEQ). The C-terminal domain stretch occupies residues 2257-2477 (HQEIRAMRSQ…IEFTRSLFVN (221 aa)). EF-hand domains are found at residues 2328–2363 (EALK…LGYD), 2371–2406 (EPDP…RETE), and 2409–2444 (KSSE…EQAD). Ca(2+) contacts are provided by D2341, D2343, S2345, R2347, E2352, D2384, N2386, D2388, H2390, and E2395.

It belongs to the spectrin family. In terms of assembly, like erythrocyte spectrin, the spectrin-like proteins are capable of forming dimers which can further associate to tetramers. Interacts with ACP1. Phosphorylation of Tyr-1176 decreases sensitivity to cleavage by calpain in vitro.

Its subcellular location is the cytoplasm. It is found in the cytoskeleton. It localises to the cell cortex. In terms of biological role, morphologically, spectrin-like proteins appear to be related to spectrin, showing a flexible rod-like structure. They can bind actin but seem to differ in their calmodulin-binding activity. In nonerythroid tissues, spectrins, in association with some other proteins, may play an important role in membrane organization. This Gallus gallus (Chicken) protein is Spectrin alpha chain, non-erythrocytic 1 (SPTAN1).